Reading from the N-terminus, the 97-residue chain is NADH-ubiquinone oxidoreductase chain 4L (97 aa).

3 consecutive transmembrane segments (helical) span residues 1 to 21 (MSMF…YVFC), 28 to 48 (LVVL…IVLF), and 57 to 77 (FFPV…LSIL).

The protein belongs to the complex I subunit 4L family.

It is found in the mitochondrion membrane. It catalyses the reaction a ubiquinone + NADH + 5 H(+)(in) = a ubiquinol + NAD(+) + 4 H(+)(out). Functionally, core subunit of the mitochondrial membrane respiratory chain NADH dehydrogenase (Complex I) that is believed to belong to the minimal assembly required for catalysis. Complex I functions in the transfer of electrons from NADH to the respiratory chain. The immediate electron acceptor for the enzyme is believed to be ubiquinone. The protein is NADH-ubiquinone oxidoreductase chain 4L (ND4L) of Locusta migratoria (Migratory locust).